Consider the following 465-residue polypeptide: Pancreatic triacylglycerol lipase (465 aa).

Positions 1 to 16 are cleaved as a signal peptide; that stretch reads MLLLWILSLFLETVAG. Disulfide bonds link C20/C26 and C107/C118. S169 functions as the Nucleophile in the catalytic mechanism. Residue D193 is the Charge relay system of the active site. Residues E204, R207, D209, and D212 each coordinate Ca(2+). Residues C254 and C278 are joined by a disulfide bond. The active-site Charge relay system is the H280. 2 cysteine pairs are disulfide-bonded: C302-C313 and C316-C321. Residues N351, N398, and N425 are each glycosylated (N-linked (GlcNAc...) asparagine). The PLAT domain maps to 355 to 465; it reads WRYRIAVTLS…EEVLLTLQPC (111 aa). A disulfide bridge connects residues C449 and C465.

The protein belongs to the AB hydrolase superfamily. Lipase family. Forms a 1:1 stoichiometric complex with (pro)colipase/CLPS.

The protein localises to the secreted. It carries out the reaction a triacylglycerol + H2O = a diacylglycerol + a fatty acid + H(+). The enzyme catalyses 1,2,3-tributanoylglycerol + H2O = dibutanoylglycerol + butanoate + H(+). The catalysed reaction is 1,2,3-tri-(9Z-octadecenoyl)-glycerol + H2O = di-(9Z)-octadecenoylglycerol + (9Z)-octadecenoate + H(+). It catalyses the reaction all-trans-retinyl hexadecanoate + H2O = all-trans-retinol + hexadecanoate + H(+). It carries out the reaction 1,2-di-(9Z-octadecenoyl)-glycerol + H2O = (9Z-octadecenoyl)-glycerol + (9Z)-octadecenoate + H(+). With respect to regulation, inhibited by bile salts, is reactivated by (pro)colipase/CLPS. Plays an important role in fat metabolism. It preferentially splits the esters of long-chain fatty acids at positions 1 and 3, producing mainly 2-monoacylglycerol and free fatty acids, and shows considerably higher activity against insoluble emulsified substrates than against soluble ones. The protein is Pancreatic triacylglycerol lipase (PNLIP) of Cavia porcellus (Guinea pig).